A 29-amino-acid chain; its full sequence is Conotoxin SIVC (29 aa).

Ala1 is subject to N-acetylalanine; partial. Pro2 carries the 4-hydroxyproline modification. Residues Thr7 and Thr9 are each glycosylated (O-linked (HexNAc...) threonine). 4-hydroxyproline is present on residues Pro18 and Pro22. Position 29 is a cysteine amide (Cys29).

The protein belongs to the conotoxin A superfamily. O-linked glycans consist of Hex4-HexNAc2 hexasaccharides. Post-translationally, N-terminus is found to be free and N-acetylated, depending on the fraction studied. In terms of processing, contains 3 disulfide bonds. As to expression, expressed by the venom duct. Low expression in the distal venom duct sections.

Its subcellular location is the secreted. Its function is as follows. Probable neurotoxin with ion channel inhibitor activity. The sequence is that of Conotoxin SIVC from Conus striatus (Striated cone).